The chain runs to 71 residues: Protein MMP24OS (71 aa).

The span at 1–10 (MGAQLSGGRG) shows a compositional bias: gly residues. The disordered stretch occupies residues 1–61 (MGAQLSGGRG…PSPWGPLDDV (61 aa)). Positions 36-55 (HPPQPQPQPQPQPQPEPSPW) are enriched in pro residues.

This Homo sapiens (Human) protein is Protein MMP24OS.